The primary structure comprises 72 residues: MSQYDHNQSAGANPPPPMSTCTSPPPPIGYPTNQPSHGSVAQGKVETKSKGDGFFKGCLAAMCCCCALDICF.

The segment covering 1–11 (MSQYDHNQSAG) has biased composition (polar residues). Residues 1–46 (MSQYDHNQSAGANPPPPMSTCTSPPPPIGYPTNQPSHGSVAQGKVE) are disordered. The segment covering 13–29 (NPPPPMSTCTSPPPPIG) has biased composition (pro residues). A helical transmembrane segment spans residues 49–65 (SKGDGFFKGCLAAMCCC).

This sequence belongs to the CYSTM1 family. As to quaternary structure, heterodimers. Binds weakly to CYSTM7 and WIH1/CYSTM13. As to expression, mostly expressed in roots, flowers and siliques and, to a lower extent, in stems and leaves.

It is found in the cell membrane. It localises to the nucleus. Functionally, may be involved in aluminium (Al) tolerance. Involved in resistance to abiotic stress. This Arabidopsis thaliana (Mouse-ear cress) protein is Protein CYSTEINE-RICH TRANSMEMBRANE MODULE 1.